Here is a 498-residue protein sequence, read N- to C-terminus: 3-octaprenyl-4-hydroxybenzoate carboxy-lyase (498 aa).

N175 serves as a coordination point for Mn(2+). Prenylated FMN is bound by residues 178-180 (IYR), 192-194 (RWL), and 197-198 (RG). E241 lines the Mn(2+) pocket. D290 (proton donor) is an active-site residue.

Belongs to the UbiD family. As to quaternary structure, homohexamer. It depends on prenylated FMN as a cofactor. Mn(2+) serves as cofactor.

It localises to the cell membrane. The catalysed reaction is a 4-hydroxy-3-(all-trans-polyprenyl)benzoate + H(+) = a 2-(all-trans-polyprenyl)phenol + CO2. It participates in cofactor biosynthesis; ubiquinone biosynthesis. Its function is as follows. Catalyzes the decarboxylation of 3-octaprenyl-4-hydroxy benzoate to 2-octaprenylphenol, an intermediate step in ubiquinone biosynthesis. The polypeptide is 3-octaprenyl-4-hydroxybenzoate carboxy-lyase (Yersinia pseudotuberculosis serotype I (strain IP32953)).